We begin with the raw amino-acid sequence, 513 residues long: V-type proton ATPase subunit B, kidney isoform (513 aa).

A compositionally biased stretch (polar residues) spans 1–18 (MATTVDSRSSGFTGNSCD). The disordered stretch occupies residues 1 to 21 (MATTVDSRSSGFTGNSCDPGT). Arg394 provides a ligand contact to ATP. The PDZ-binding motif lies at 510–513 (DTAL).

Belongs to the ATPase alpha/beta chains family. In terms of assembly, V-ATPase is a heteromultimeric enzyme made up of two complexes: the ATP-hydrolytic V1 complex and the proton translocation V0 complex. The V1 complex consists of three catalytic AB heterodimers that form a heterohexamer, three peripheral stalks each consisting of EG heterodimers, one central rotor including subunits D and F, and the regulatory subunits C and H. The proton translocation complex V0 consists of the proton transport subunit a, a ring of proteolipid subunits c9c'', rotary subunit d, subunits e and f, and the accessory subunits ATP6AP1/Ac45 and ATP6AP2/PRR. Forms a complex with NHERF1 and SCL4A7. Highly expressed in the kidney; found in early distal nephron, encompassing thick ascending limbs and distal convoluted tubules and in the alpha-intercalated cells of the cortical collecting ducts (at protein level). Expressed in the olfactory epithelium (at protein level). Expressed at lower levels in the testis.

It localises to the apical cell membrane. It is found in the basolateral cell membrane. Its function is as follows. Non-catalytic subunit of the V1 complex of vacuolar(H+)-ATPase (V-ATPase), a multisubunit enzyme composed of a peripheral complex (V1) that hydrolyzes ATP and a membrane integral complex (V0) that translocates protons. V-ATPase is responsible for acidifying and maintaining the pH of intracellular compartments and in some cell types, is targeted to the plasma membrane, where it is responsible for acidifying the extracellular environment. Essential for the proper assembly and activity of V-ATPase. In renal intercalated cells, mediates secretion of protons (H+) into the urine thereby ensuring correct urinary acidification. Required for optimal olfactory function by mediating the acidification of the nasal olfactory epithelium. This is V-type proton ATPase subunit B, kidney isoform (Atp6v1b1) from Mus musculus (Mouse).